We begin with the raw amino-acid sequence, 412 residues long: G-protein coupled receptor homolog UL33 (412 aa).

The Virion surface portion of the chain corresponds to 1–35 (MDTIIHNTTNRSTDTPHVNITCNITEPLSAIRTTE). N7, N19, and N23 each carry an N-linked (GlcNAc...) asparagine; by host glycan. The chain crosses the membrane as a helical span at residues 36-56 (AVINTFIIFVGGPLNAIVLIT). The Intravirion segment spans residues 57 to 80 (QLLTNRVLGYSTPTIYMTNLYSTN). Residues 81-101 (FLTLTVLPFIVLSNQWLLPAS) traverse the membrane as a helical segment. The Virion surface segment spans residues 102–106 (VASCK). A disulfide bridge connects residues C105 and C188. A helical membrane pass occupies residues 107–127 (FLSVIYYSSCTVGFATVALIA). The Intravirion portion of the chain corresponds to 128–147 (ADRYRVLHKRTYARQSYRST). Residues 148–168 (YIILLLTWFAGLIFSMPAAVY) traverse the membrane as a helical segment. Residues 169–206 (TTVVIHNGTNGQSSNGHATCVLYFIADEVYTVLLSWKV) are Virion surface-facing. A helical membrane pass occupies residues 207–227 (LLTLVWGAAPVIMMTWFYAFF). The Intravirion segment spans residues 228-244 (YSTVQRASQKQRSRTLT). The chain crosses the membrane as a helical span at residues 245-265 (FVSVLLISFVALQTPYVSIMI). At 266–292 (FNSYATAAWPMDCEHLTLRRTIGTLSR) the chain is on the virion surface side. A helical transmembrane segment spans residues 293 to 313 (LVPHLHCLINPILYALLGHDF). Residues 314–412 (LQRMRQCFRG…SQSHHNLSGV (99 aa)) are Intravirion-facing. Residues 377 to 412 (NFPSGTWKGGQKTASNDTSTKIPHRLSQSHHNLSGV) form a disordered region. Residues 388–397 (KTASNDTSTK) show a composition bias toward polar residues.

It belongs to the G-protein coupled receptor 1 family. In terms of assembly, heterodimerizes with US28.

It is found in the virion. It localises to the host cell membrane. The protein resides in the host cytoplasm. G-protein-coupled receptor (vGPCR) that constitutively activates multiple oncogenic signaling pathways including STAT3, AP-1, phospholipase C, NF-kappa-B or cAMP-responsive element (CRE) pathways. Plays an important role in viral reactivation from latency through activation of host CREB1, facilitating its recruitment to the viral major immediate early (MIE) genes. In turn, expression of the MIE-driven genes such as UL123 are de-repressed. Also facilitates virus dissemination via the extracellular and cell-to-cell route. The protein is G-protein coupled receptor homolog UL33 (UL33) of Human cytomegalovirus (strain Merlin) (HHV-5).